Reading from the N-terminus, the 245-residue chain is Type II restriction enzyme MjaIV (245 aa).

It carries out the reaction Endonucleolytic cleavage of DNA to give specific double-stranded fragments with terminal 5'-phosphates.. Functionally, a P subtype restriction enzyme that recognizes the double-stranded sequence 5'-GTNNAC-3'; the cleavage site is unknown. This chain is Type II restriction enzyme MjaIV (mjaIVR), found in Methanocaldococcus jannaschii (strain ATCC 43067 / DSM 2661 / JAL-1 / JCM 10045 / NBRC 100440) (Methanococcus jannaschii).